Here is a 65-residue protein sequence, read N- to C-terminus: Crotamine (65 aa).

A signal peptide spans 1 to 22; the sequence is MKILYLLFAFLFLAFLSEPGNA. Short sequence motifs (nuclear localization signal) lie at residues 24–40 and 49–61; these read KQCH…EKIC and KMDC…CCKK. Disulfide bonds link Cys26-Cys58, Cys33-Cys52, and Cys40-Cys59.

It belongs to the crotamine-myotoxin family. Monomer. As to expression, expressed by the venom gland.

The protein resides in the secreted. Functionally, cationic peptide that possesses multiple functions. It acts as a cell-penetrating peptide (CPP), and as a potent voltage-gated potassium channel inhibitor. It exhibits antimicrobial activities, hind limb paralysis, and severe muscle necrosis by a non-enzymatic mechanism. As a cell-penetrating peptide, crotamine has high specificity for actively proliferating cells, and interacts inside the cell with subcellular and subnuclear structures, like vesicular compartments, chromosomes and centrioles. It penetrates into the cells as fast as five minutes after its addition to cell culture medium. In vivo, after intraperitoneal administration, it is found in cells of peritoneal fluid and bone marrow, demonstrating preferential nuclear and perinuclear localization. To enter the cell, it interacts with the chains of heparan sulfate membrane proteoglycan (HSPG), and is endocytosed (in complex with HSPG) in vesicles which are transported into the cell with the help of clathrin. Inside the cell, crotamine accumulates in lysosomal vesicles. As soon as the peptide accumulates in endosomes/lysosomes vesicles, these compartments are disrupted and their contents released into the cytosol. This loss of lysosomal content induces cell death at high concentrations, or promotes the distribution of crotamine in cytoplasmic compartments, which is a step before crotamine nuclear uptake. As a potassium channel inhibitor, this toxin selectively inhibits Kv1.1/KCNA1, Kv1.2/KCNA2 and Kv1.3/KCNA3 channels with an IC(50) of 369, 386 and 287 nM, respectively. The inhibition of Kv1.3/KCNA channels induced by this toxin occurs rapidly and is voltage-independent. The channel inhibition is reversible after washing, suggesting a pure and classical channel blockage effect, without effects in potassium channel kinetics. As an antimicrobial peptide, crotamine shows antibacterial activity against E.coli and B.subtilis, and antifungal activity against Candida spp., Trichosporon spp. and C.neoformans. It kills bacteria through membrane permeabilization. This is Crotamine (CRO2) from Crotalus durissus terrificus (South American rattlesnake).